The following is a 764-amino-acid chain: Protein Lines homolog 1 (764 aa).

Disordered stretches follow at residues 615 to 668 (SQSQ…TSLC) and 682 to 702 (WEEQKEHSLEPLLSAESSSPF). Over residues 645–654 (DSSEASEEET) the composition is skewed to acidic residues. Position 650 is a phosphoserine (S650). Over residues 658-668 (HLANSKQTSLC) the composition is skewed to polar residues. Residues 691–702 (EPLLSAESSSPF) show a composition bias toward low complexity.

The protein belongs to the protein lines family.

This chain is Protein Lines homolog 1, found in Mus musculus (Mouse).